The following is a 465-amino-acid chain: G1/S-specific cyclin CLN3 (465 aa).

The 128-residue stretch at Glu44–Val171 folds into the Cyclin N-terminal domain.

It belongs to the cyclin family. Interacts with CDC28 and SLA1. In terms of processing, hyperphosphorylated. GRR1 preferentially mediates the degradation of hyperphosphorylated CLN3.

Its function is as follows. G1/S-specific cyclin essential for the control of the cell cycle at the G1/S (start) transition. CLN3 may be an upstream activator of the G1 cyclins which directly catalyze start. Required for budding and for cell cycle progression and morphogenesis in environment-induced hyphae. Degradation is mediated by GRR1. Through binding to CDC28, controls the phosphorylation of SLA1 which regulates cortical actin patch dynamics. This chain is G1/S-specific cyclin CLN3 (CLN3), found in Candida albicans (strain SC5314 / ATCC MYA-2876) (Yeast).